The sequence spans 3479 residues: Abnormal spindle-like microcephaly-associated protein homolog (3479 aa).

The disordered stretch occupies residues 1–29 (MANRRVGRGCWEVSPTERRPPAALRGPAT). Residues Ser280, Ser283, Ser367, Ser392, Ser425, and Ser605 each carry the phosphoserine modification. Residues 920–1056 (KASKEILLAF…LLWKIAFAFQ (137 aa)) enclose the Calponin-homology (CH) 1 domain. Residues 1057-1078 (VDISLNLDQLKEEIAFLKHTKS) adopt a coiled-coil conformation. Ser1103 carries the phosphoserine modification. Positions 1110-1261 (SENIKLLMDW…YLSFLCARLL (152 aa)) constitute a Calponin-homology (CH) 2 domain. IQ domains follow at residues 1347–1378 (QNKA…IILQ), 1393–1422 (YLWA…MLKS), 1582–1613 (LKKT…VIIQ), 1605–1634 (MKKA…KTRS), 1632–1661 (TRSA…SVIK), 1655–1684 (ILTS…TTIK), 1728–1757 (MRES…AVIS), 1751–1782 (QRKA…MVIQ), 1801–1830 (VKKA…AALK), 1824–1853 (QSIA…SIIK), 1874–1903 (TKAA…AALK), 1897–1928 (EHQA…LVIQ), 1947–1978 (LRHA…IIIQ), 1970–2001 (QHKC…LLIQ), 2020–2049 (TKAA…AAVT), 2043–2074 (CNKA…IIIQ), 2093–2124 (LKKT…TFIK), 2116–2147 (MHRA…IVIQ), 2239–2270 (LRHS…TLIQ), 2262–2293 (MHVA…VWIQ), 2311–2342 (VQNA…TFIQ), 2334–2365 (MHRA…VVIQ), 2384–2415 (QRRS…TLIQ), 2407–2438 (MHSS…IFVQ), 2533–2564 (QWHS…IIIQ), 2627–2656 (QHQA…TVVS), 2668–2699 (RTQA…TLIQ), 2691–2722 (MHRA…VVIQ), 2741–2770 (VQKS…EKMA), 2817–2848 (QSRA…RIQF), 2862–2893 (QKRA…VVLQ), 2912–2941 (IRSS…STIK), 2935–2966 (IKNS…KIQA), 2957–2988 (KVKA…KIIQ), 3032–3063 (RHRA…LIIQ), 3082–3113 (FKKS…RLLH), and 3206–3237 (FTSG…IRLS).

It is found in the cytoplasm. The protein localises to the cytoskeleton. Its subcellular location is the spindle. The protein resides in the nucleus. In terms of biological role, probable role in mitotic spindle regulation and coordination of mitotic processes. May have a preferential role in regulating neurogenesis. This Macaca mulatta (Rhesus macaque) protein is Abnormal spindle-like microcephaly-associated protein homolog (ASPM).